The primary structure comprises 97 residues: Sugar transporter SemiSWEET (97 aa).

A PQ-loop domain is found at 4-70 (IERIGKALEP…IYGIYHKNPT (67 aa)). A run of 3 helical transmembrane segments spans residues 15 to 35 (MLVMGLISPLATMPQLYKLYV), 44 to 65 (LSLTTWLLYSFIALLWTIYGIY), and 71 to 91 (IWVGNCLGFLMYVAMVVGIIA).

In terms of assembly, homodimer.

The protein resides in the cell membrane. Its function is as follows. The homodimer mediates transmembrane sugar transport down a concentration gradient. Transport is probably effected by rocking-type movements, where a cargo-binding cavity opens first on one and then on the other side of the membrane. This is Sugar transporter SemiSWEET from Vibrio sp. (strain N418).